A 247-amino-acid polypeptide reads, in one-letter code: Mannose-specific lectin CML-2 (247 aa).

The a carbohydrate site is built by Asp-87 and Gly-107. A glycan (N-linked (GlcNAc...) asparagine) is linked at Asn-119. Residues Glu-129 and Asp-131 each coordinate Mn(2+). Ca(2+) contacts are provided by Asp-131 and Phe-133. 2 residues coordinate a carbohydrate: Ser-138 and Asn-139. Residues Asn-139 and Asp-142 each coordinate Ca(2+). Mn(2+) is bound by residues Asp-142 and His-147. A carbohydrate contacts are provided by Gly-221, Glu-222, and Gln-223.

It belongs to the leguminous lectin family. In terms of assembly, homodimer; non-covalently linked. In terms of processing, glycosylated.

Its function is as follows. Mannose-specific lectin. Also binds alpha-methyl-D-mannoside, D-glucose, N-acetyl-D-glucosamine and sucrose but not D-galactose, D-arabinose, D-fructose, D-xylose, lactose or glycoproteins fetiun, PSM and ovalbumin. Shows agglutinating activity towards rabbit erythrocytes. The chain is Mannose-specific lectin CML-2 from Centrolobium microchaete (Canarywood tree).